A 427-amino-acid polypeptide reads, in one-letter code: UPF0761 membrane protein Cphamn1_1013 (427 aa).

The next 6 helical transmembrane spans lie at 51 to 71, 107 to 127, 147 to 167, 188 to 208, 218 to 238, and 251 to 271; these read LLSLIPLMAVVLSVLSVSPVF, TVPTVGGIFLLIIALFLISTI, FTLYWTVLTLGPIIIGSGLVA, ILSYLPLVNSFLAFFLLYMLV, AVSGAFLATWLFELSKQWFSF, and GALSVIPLLFFWIYLIWVVAL.

It belongs to the UPF0761 family.

It is found in the cell inner membrane. The chain is UPF0761 membrane protein Cphamn1_1013 from Chlorobium phaeobacteroides (strain BS1).